Consider the following 131-residue polypeptide: Large ribosomal subunit protein bL19 (131 aa).

Belongs to the bacterial ribosomal protein bL19 family.

This protein is located at the 30S-50S ribosomal subunit interface and may play a role in the structure and function of the aminoacyl-tRNA binding site. The sequence is that of Large ribosomal subunit protein bL19 from Rhodopseudomonas palustris (strain BisA53).